The sequence spans 154 residues: MATFSQKPAEVEKKWVIIDAEGLVVGRLASIIAMRLRGKHKATFTPHVDDGDNVIVINADKVVFTGKKYSDKVYYWHTGFAGGIKERTARQIIEGRFPERVLEKAVERMVPRGPLGRRQMKNLRVYAGSNHPHEAQQPVALDVAVLNKKNVRSA.

The protein belongs to the universal ribosomal protein uL13 family. In terms of assembly, part of the 50S ribosomal subunit.

Functionally, this protein is one of the early assembly proteins of the 50S ribosomal subunit, although it is not seen to bind rRNA by itself. It is important during the early stages of 50S assembly. The chain is Large ribosomal subunit protein uL13 from Rhizobium leguminosarum bv. trifolii (strain WSM2304).